We begin with the raw amino-acid sequence, 334 residues long: ADP-L-glycero-D-manno-heptose-6-epimerase (334 aa).

Residues 11–12, 32–33, Lys39, Lys54, 77–81, and Asn94 each bind NADP(+); these read FI, DN, and QGACS. Tyr141 acts as the Proton acceptor in catalysis. Lys145 lines the NADP(+) pocket. Asn171 contacts substrate. NADP(+) is bound by residues Val172 and Lys180. The active-site Proton acceptor is Lys180. Substrate is bound by residues Arg182, His189, 203-206, Arg216, and Tyr295; that span reads FGSN.

It belongs to the NAD(P)-dependent epimerase/dehydratase family. HldD subfamily. Homopentamer. NADP(+) is required as a cofactor.

It catalyses the reaction ADP-D-glycero-beta-D-manno-heptose = ADP-L-glycero-beta-D-manno-heptose. Its pathway is nucleotide-sugar biosynthesis; ADP-L-glycero-beta-D-manno-heptose biosynthesis; ADP-L-glycero-beta-D-manno-heptose from D-glycero-beta-D-manno-heptose 7-phosphate: step 4/4. In terms of biological role, catalyzes the interconversion between ADP-D-glycero-beta-D-manno-heptose and ADP-L-glycero-beta-D-manno-heptose via an epimerization at carbon 6 of the heptose. The chain is ADP-L-glycero-D-manno-heptose-6-epimerase from Neisseria meningitidis serogroup C (strain 053442).